Here is a 180-residue protein sequence, read N- to C-terminus: Oligoribonuclease (180 aa).

An Exonuclease domain is found at 7 to 170; the sequence is LIWIDLEMTG…DDIRESIAEL (164 aa). Tyrosine 128 is a catalytic residue.

Belongs to the oligoribonuclease family.

The protein localises to the cytoplasm. Functionally, 3'-to-5' exoribonuclease specific for small oligoribonucleotides. This is Oligoribonuclease from Ectopseudomonas mendocina (strain ymp) (Pseudomonas mendocina).